The primary structure comprises 56 residues: U4-myrmicitoxin-Tb1a (56 aa).

Residues 1–26 form the signal peptide; sequence MQPSYLLLTFAIIFVMVIMYSPAVEA. The propeptide occupies 27–40; that stretch reads KAGADADADAHADA. A Glycine amide modification is found at glycine 53.

Contains 1 disulfide bond. Expressed by the venom gland.

It localises to the secreted. Functionally, venom protein with unknown function. Does not induce paralysis when a high dose is administered by intrathoracic injection into the blowfly Lucilia caesar. The polypeptide is U4-myrmicitoxin-Tb1a (Tetramorium bicarinatum (Tramp ant)).